We begin with the raw amino-acid sequence, 190 residues long: 6,7-dimethyl-8-ribityllumazine synthase (190 aa).

Residues Trp31, 65–67, and 89–91 contribute to the 5-amino-6-(D-ribitylamino)uracil site; these read SFE and CVI. A (2S)-2-hydroxy-3-oxobutyl phosphate-binding site is contributed by 94 to 95; it reads ET. Residue His97 is the Proton donor of the active site. A 5-amino-6-(D-ribitylamino)uracil-binding site is contributed by Phe122. Residue Arg136 participates in (2S)-2-hydroxy-3-oxobutyl phosphate binding.

This sequence belongs to the DMRL synthase family.

The enzyme catalyses (2S)-2-hydroxy-3-oxobutyl phosphate + 5-amino-6-(D-ribitylamino)uracil = 6,7-dimethyl-8-(1-D-ribityl)lumazine + phosphate + 2 H2O + H(+). Its pathway is cofactor biosynthesis; riboflavin biosynthesis; riboflavin from 2-hydroxy-3-oxobutyl phosphate and 5-amino-6-(D-ribitylamino)uracil: step 1/2. Catalyzes the formation of 6,7-dimethyl-8-ribityllumazine by condensation of 5-amino-6-(D-ribitylamino)uracil with 3,4-dihydroxy-2-butanone 4-phosphate. This is the penultimate step in the biosynthesis of riboflavin. This Flavobacterium johnsoniae (strain ATCC 17061 / DSM 2064 / JCM 8514 / BCRC 14874 / CCUG 350202 / NBRC 14942 / NCIMB 11054 / UW101) (Cytophaga johnsonae) protein is 6,7-dimethyl-8-ribityllumazine synthase.